A 220-amino-acid chain; its full sequence is Orotate phosphoribosyltransferase (220 aa).

Lys-26 contacts 5-phospho-alpha-D-ribose 1-diphosphate. Residue 34 to 35 (FF) participates in orotate binding. Residues 72–73 (YK), Arg-99, Lys-100, Lys-103, His-105, and 125–133 (DDVISAGTS) each bind 5-phospho-alpha-D-ribose 1-diphosphate. Ser-129 and Arg-157 together coordinate orotate.

It belongs to the purine/pyrimidine phosphoribosyltransferase family. PyrE subfamily. As to quaternary structure, homodimer. The cofactor is Mg(2+).

It carries out the reaction orotidine 5'-phosphate + diphosphate = orotate + 5-phospho-alpha-D-ribose 1-diphosphate. Its pathway is pyrimidine metabolism; UMP biosynthesis via de novo pathway; UMP from orotate: step 1/2. Catalyzes the transfer of a ribosyl phosphate group from 5-phosphoribose 1-diphosphate to orotate, leading to the formation of orotidine monophosphate (OMP). The chain is Orotate phosphoribosyltransferase from Nitrosococcus oceani (strain ATCC 19707 / BCRC 17464 / JCM 30415 / NCIMB 11848 / C-107).